The chain runs to 166 residues: Peptide methionine sulfoxide reductase MsrA (166 aa).

The active site involves Cys11.

This sequence belongs to the MsrA Met sulfoxide reductase family.

It catalyses the reaction L-methionyl-[protein] + [thioredoxin]-disulfide + H2O = L-methionyl-(S)-S-oxide-[protein] + [thioredoxin]-dithiol. It carries out the reaction [thioredoxin]-disulfide + L-methionine + H2O = L-methionine (S)-S-oxide + [thioredoxin]-dithiol. Functionally, has an important function as a repair enzyme for proteins that have been inactivated by oxidation. Catalyzes the reversible oxidation-reduction of methionine sulfoxide in proteins to methionine. This Mycoplasmopsis pulmonis (strain UAB CTIP) (Mycoplasma pulmonis) protein is Peptide methionine sulfoxide reductase MsrA.